The chain runs to 429 residues: 4-hydroxy-3-methylbut-2-en-1-yl diphosphate synthase (flavodoxin) (429 aa).

Cysteine 317, cysteine 320, cysteine 363, and glutamate 370 together coordinate [4Fe-4S] cluster.

This sequence belongs to the IspG family. Requires [4Fe-4S] cluster as cofactor.

It carries out the reaction (2E)-4-hydroxy-3-methylbut-2-enyl diphosphate + oxidized [flavodoxin] + H2O + 2 H(+) = 2-C-methyl-D-erythritol 2,4-cyclic diphosphate + reduced [flavodoxin]. It participates in isoprenoid biosynthesis; isopentenyl diphosphate biosynthesis via DXP pathway; isopentenyl diphosphate from 1-deoxy-D-xylulose 5-phosphate: step 5/6. Its function is as follows. Converts 2C-methyl-D-erythritol 2,4-cyclodiphosphate (ME-2,4cPP) into 1-hydroxy-2-methyl-2-(E)-butenyl 4-diphosphate. In Deinococcus radiodurans (strain ATCC 13939 / DSM 20539 / JCM 16871 / CCUG 27074 / LMG 4051 / NBRC 15346 / NCIMB 9279 / VKM B-1422 / R1), this protein is 4-hydroxy-3-methylbut-2-en-1-yl diphosphate synthase (flavodoxin).